Consider the following 195-residue polypeptide: Phosphoheptose isomerase (195 aa).

One can recognise an SIS domain in the interval leucine 35 to asparagine 195. A substrate-binding site is contributed by asparagine 51–glycine 53. Residues histidine 60 and glutamate 64 each coordinate Zn(2+). Residues glutamate 64, asparagine 93–aspartate 94, serine 119–serine 121, serine 124, and glutamine 171 contribute to the substrate site. Zn(2+) contacts are provided by glutamine 171 and histidine 179.

Belongs to the SIS family. GmhA subfamily. As to quaternary structure, homotetramer. Zn(2+) is required as a cofactor.

It is found in the cytoplasm. The catalysed reaction is 2 D-sedoheptulose 7-phosphate = D-glycero-alpha-D-manno-heptose 7-phosphate + D-glycero-beta-D-manno-heptose 7-phosphate. It functions in the pathway carbohydrate biosynthesis; D-glycero-D-manno-heptose 7-phosphate biosynthesis; D-glycero-alpha-D-manno-heptose 7-phosphate and D-glycero-beta-D-manno-heptose 7-phosphate from sedoheptulose 7-phosphate: step 1/1. Its function is as follows. Catalyzes the isomerization of sedoheptulose 7-phosphate in D-glycero-D-manno-heptose 7-phosphate. This chain is Phosphoheptose isomerase, found in Sulfurimonas denitrificans (strain ATCC 33889 / DSM 1251) (Thiomicrospira denitrificans (strain ATCC 33889 / DSM 1251)).